The following is a 179-amino-acid chain: Large ribosomal subunit protein uL5 (179 aa).

It belongs to the universal ribosomal protein uL5 family. In terms of assembly, part of the 50S ribosomal subunit; part of the 5S rRNA/L5/L18/L25 subcomplex. Contacts the 5S rRNA and the P site tRNA. Forms a bridge to the 30S subunit in the 70S ribosome.

In terms of biological role, this is one of the proteins that bind and probably mediate the attachment of the 5S RNA into the large ribosomal subunit, where it forms part of the central protuberance. In the 70S ribosome it contacts protein S13 of the 30S subunit (bridge B1b), connecting the 2 subunits; this bridge is implicated in subunit movement. Contacts the P site tRNA; the 5S rRNA and some of its associated proteins might help stabilize positioning of ribosome-bound tRNAs. The chain is Large ribosomal subunit protein uL5 from Shewanella denitrificans (strain OS217 / ATCC BAA-1090 / DSM 15013).